Reading from the N-terminus, the 238-residue chain is Probable transcriptional regulatory protein YeeN (238 aa).

The protein belongs to the TACO1 family. YeeN subfamily.

The protein resides in the cytoplasm. This is Probable transcriptional regulatory protein YeeN from Escherichia coli (strain UTI89 / UPEC).